The primary structure comprises 214 residues: Holliday junction branch migration complex subunit RuvA (214 aa).

The segment at 1–63 (MIASLSGTVE…EDALTLYGFA (63 aa)) is domain I. Residues 64–142 (DRDEREVFEV…PTGEPVPGAE (79 aa)) are domain II. Residues 143–151 (AEASDEPAV) form a flexible linker region. A domain III region spans residues 151-214 (VETVWHADVV…GMAGAVRGGR (64 aa)).

This sequence belongs to the RuvA family. In terms of assembly, homotetramer. Forms an RuvA(8)-RuvB(12)-Holliday junction (HJ) complex. HJ DNA is sandwiched between 2 RuvA tetramers; dsDNA enters through RuvA and exits via RuvB. An RuvB hexamer assembles on each DNA strand where it exits the tetramer. Each RuvB hexamer is contacted by two RuvA subunits (via domain III) on 2 adjacent RuvB subunits; this complex drives branch migration. In the full resolvosome a probable DNA-RuvA(4)-RuvB(12)-RuvC(2) complex forms which resolves the HJ.

The protein localises to the cytoplasm. In terms of biological role, the RuvA-RuvB-RuvC complex processes Holliday junction (HJ) DNA during genetic recombination and DNA repair, while the RuvA-RuvB complex plays an important role in the rescue of blocked DNA replication forks via replication fork reversal (RFR). RuvA specifically binds to HJ cruciform DNA, conferring on it an open structure. The RuvB hexamer acts as an ATP-dependent pump, pulling dsDNA into and through the RuvAB complex. HJ branch migration allows RuvC to scan DNA until it finds its consensus sequence, where it cleaves and resolves the cruciform DNA. This chain is Holliday junction branch migration complex subunit RuvA, found in Micrococcus luteus (strain ATCC 4698 / DSM 20030 / JCM 1464 / CCM 169 / CCUG 5858 / IAM 1056 / NBRC 3333 / NCIMB 9278 / NCTC 2665 / VKM Ac-2230) (Micrococcus lysodeikticus).